The sequence spans 467 residues: MAAAARARVAYLLRQLQRAACQCPTHSHTYSQAPGLSPSGKTTDYAFEMAVSNIRYGAAVTKEVGMDLKNMGAKNVCLMTDKNLSKLPPVQVAMDSLVKNGIPFTVYDNVRVEPTDSSFMEAIEFAQKGAFDAYVAVGGGSTMDTCKAANLYASSPHSDFLDYVSAPIGKGKPVSVPLKPLIAVPTTSGTGSETTGVAIFDYEHLKVKIGITSRAIKPTLGLIDPLHTLHMPARVVANSGFDVLCHALESYTTLPYHLRSPCPSNPITRPAYQGSNPISDIWAIHALRIVAKYLKRAVRNPDDLEARSHMHLASAFAGIGFGNAGVHLCHGMSYPISGLVKMYKAKDYNVDHPLVPHGLSVVLTSPAVFTFTAQMFPERHLEMAEILGADTRTARIQDAGLVLADTLRKFLFDLDVDDGLAAVGYSKADIPALVKGTLPQERVTKLAPCPQSEEDLAALFEASMKLY.

N6-acetyllysine is present on Lys-445. Ser-452 carries the phosphoserine modification.

It belongs to the iron-containing alcohol dehydrogenase family. Hydroxyacid-oxoacid transhydrogenase subfamily. In terms of tissue distribution, only expressed in adult liver.

The protein localises to the mitochondrion. It catalyses the reaction (S)-3-hydroxybutanoate + 2-oxoglutarate = (R)-2-hydroxyglutarate + acetoacetate. The catalysed reaction is 4-hydroxybutanoate + 2-oxoglutarate = (R)-2-hydroxyglutarate + succinate semialdehyde. Catalyzes the cofactor-independent reversible oxidation of gamma-hydroxybutyrate (GHB) to succinic semialdehyde (SSA) coupled to reduction of 2-ketoglutarate (2-KG) to D-2-hydroxyglutarate (D-2-HG). D,L-3-hydroxyisobutyrate and L-3-hydroxybutyrate (L-3-OHB) are also substrates for HOT with 10-fold lower activities. This chain is Hydroxyacid-oxoacid transhydrogenase, mitochondrial (ADHFE1), found in Homo sapiens (Human).